Reading from the N-terminus, the 446-residue chain is Adenylosuccinate synthetase (446 aa).

Residues 20–26 (GDEGKGK) and 48–50 (GHT) each bind GTP. D21 serves as the catalytic Proton acceptor. Residues D21 and G48 each coordinate Mg(2+). Residues 21–24 (DEGK), 46–49 (NAGH), T137, R151, Q232, T247, and R319 contribute to the IMP site. H49 (proton donor) is an active-site residue. 315 to 321 (SVTGRPR) is a binding site for substrate. Residues R321, 347-349 (KLD), and 429-431 (STG) each bind GTP.

Belongs to the adenylosuccinate synthetase family. As to quaternary structure, homodimer. Mg(2+) is required as a cofactor.

Its subcellular location is the cytoplasm. It carries out the reaction IMP + L-aspartate + GTP = N(6)-(1,2-dicarboxyethyl)-AMP + GDP + phosphate + 2 H(+). The protein operates within purine metabolism; AMP biosynthesis via de novo pathway; AMP from IMP: step 1/2. Plays an important role in the de novo pathway of purine nucleotide biosynthesis. Catalyzes the first committed step in the biosynthesis of AMP from IMP. This Ralstonia pickettii (strain 12J) protein is Adenylosuccinate synthetase.